The sequence spans 442 residues: Cell division protein FtsA (442 aa).

The interval 401 to 428 (VTSYDNDSYDAPEETVYDEPEQKKSDED) is disordered. Residues 407–419 (DSYDAPEETVYDE) are compositionally biased toward acidic residues.

Belongs to the FtsA/MreB family. As to quaternary structure, self-interacts. Interacts with FtsZ.

It is found in the cell membrane. Cell division protein that is involved in the assembly of the Z ring. May serve as a membrane anchor for the Z ring. This chain is Cell division protein FtsA, found in Enterococcus hirae.